Reading from the N-terminus, the 1249-residue chain is ATP-dependent helicase/nuclease subunit A (1249 aa).

A UvrD-like helicase ATP-binding domain is found at 5–482 (TNYTPSQQAV…IVLAENFRSV (478 aa)). Position 26–33 (26–33 (ASAGSGKT)) interacts with ATP. Positions 521–811 (ADMPQTTNLL…NVMTIHGSKG (291 aa)) constitute a UvrD-like helicase C-terminal domain.

This sequence belongs to the helicase family. AddA subfamily. As to quaternary structure, heterodimer of AddA and AddB/RexB. Mg(2+) is required as a cofactor.

It catalyses the reaction Couples ATP hydrolysis with the unwinding of duplex DNA by translocating in the 3'-5' direction.. The catalysed reaction is ATP + H2O = ADP + phosphate + H(+). Functionally, the heterodimer acts as both an ATP-dependent DNA helicase and an ATP-dependent, dual-direction single-stranded exonuclease. Recognizes the chi site generating a DNA molecule suitable for the initiation of homologous recombination. The AddA nuclease domain is required for chi fragment generation; this subunit has the helicase and 3' -&gt; 5' nuclease activities. The polypeptide is ATP-dependent helicase/nuclease subunit A (Lactiplantibacillus plantarum (strain ATCC BAA-793 / NCIMB 8826 / WCFS1) (Lactobacillus plantarum)).